The chain runs to 225 residues: Mitochondrial inner membrane protease ATP23 (225 aa).

Histidine 124 contacts a divalent metal cation. Residue glutamate 125 is part of the active site. A divalent metal cation is bound at residue histidine 128.

Belongs to the peptidase M76 family.

The protein resides in the mitochondrion inner membrane. Its function is as follows. Has a dual role in the assembly of mitochondrial ATPase. Acts as a protease that removes N-terminal residues of mitochondrial ATPase CF(0) subunit 6 at the intermembrane space side. Also involved in the correct assembly of the membrane-embedded ATPase CF(0) particle, probably mediating association of subunit 6 with the subunit 9 ring. This chain is Mitochondrial inner membrane protease ATP23 (ATP23), found in Candida glabrata (strain ATCC 2001 / BCRC 20586 / JCM 3761 / NBRC 0622 / NRRL Y-65 / CBS 138) (Yeast).